A 130-amino-acid chain; its full sequence is MIGNWNYGTGRRKSAVARVFIKSGKGDIVVNGKPIKEYFARETSLMIVRQPLELTEHAETFDIKVNVTGGGETGQAGAVRHGITRALIDYDATLKSALSKAGYVTRDAREVERKKVGFHKARRRKQFSKR.

Belongs to the universal ribosomal protein uS9 family.

The polypeptide is Small ribosomal subunit protein uS9 (Cupriavidus pinatubonensis (strain JMP 134 / LMG 1197) (Cupriavidus necator (strain JMP 134))).